We begin with the raw amino-acid sequence, 186 residues long: Adrenodoxin, mitochondrial (186 aa).

The N-terminal 58 residues, 1–58 (MAVRLLRVASAALGDTAVRWQPLVGPRAGNRGPGGSIWLGLGGRAAAARTLSLSARAW), are a transit peptide targeting the mitochondrion. Ser61 bears the Phosphoserine mark. Lys64 carries the N6-acetyllysine; alternate modification. At Lys64 the chain carries N6-succinyllysine; alternate. Residues 65–169 (ITVHFINRDG…NMTVRVPEAV (105 aa)) form the 2Fe-2S ferredoxin-type domain. Residues Cys104, Cys110, Cys113, and Cys150 each contribute to the [2Fe-2S] cluster site. The residue at position 156 (Lys156) is an N6-succinyllysine. At Ser175 the chain carries Phosphoserine.

The protein belongs to the adrenodoxin/putidaredoxin family. As to quaternary structure, interacts with CYP11A1. It depends on [2Fe-2S] cluster as a cofactor.

It is found in the mitochondrion matrix. Essential for the synthesis of various steroid hormones. Participates in the reduction of mitochondrial cytochrome P450 for steroidogenesis. Transfers electrons from adrenodoxin reductase to CYP11A1, a cytochrome P450 that catalyzes cholesterol side-chain cleavage. Does not form a ternary complex with adrenodoxin reductase and CYP11A1 but shuttles between the two enzymes to transfer electrons. The sequence is that of Adrenodoxin, mitochondrial (FDX1) from Sus scrofa (Pig).